The primary structure comprises 343 residues: Beta-ketoacyl-[acyl-carrier-protein] synthase III 1 (343 aa).

Active-site residues include Cys122 and His268. The tract at residues 269 to 273 (QANVR) is ACP-binding. Asn299 is a catalytic residue.

This sequence belongs to the thiolase-like superfamily. FabH family. In terms of assembly, homodimer.

It is found in the cytoplasm. The catalysed reaction is malonyl-[ACP] + acetyl-CoA + H(+) = 3-oxobutanoyl-[ACP] + CO2 + CoA. The protein operates within lipid metabolism; fatty acid biosynthesis. In terms of biological role, essential enzyme that catalyzes the condensation reaction of fatty acid synthesis by the addition to an acyl acceptor of two carbons from malonyl-ACP. Catalyzes the first condensation reaction which initiates fatty acid synthesis and may therefore play a role in governing the total rate of fatty acid production. Possesses both acetoacetyl-ACP synthase and acetyl transacylase activities. Its substrate specificity determines the biosynthesis of branched-chain of fatty acids. This chain is Beta-ketoacyl-[acyl-carrier-protein] synthase III 1, found in Streptomyces coelicolor (strain ATCC BAA-471 / A3(2) / M145).